Here is a 386-residue protein sequence, read N- to C-terminus: 11-beta-hydroxysteroid dehydrogenase type 2 (386 aa).

Residue 82 to 111 participates in NAD(+) binding; the sequence is TRAVLITGCDTGFGKETAKKLDAMGFTVLA. Ser-219 is a substrate binding site. Tyr-232 functions as the Proton acceptor in the catalytic mechanism.

It belongs to the short-chain dehydrogenases/reductases (SDR) family. Interacts with ligand-free cytoplasmic NR3C2. In terms of tissue distribution, highly expressed in kidney. Also found in colon and small intestine. Not expressed in the adrenal gland. Expressed in uterus.

It localises to the microsome. The protein resides in the endoplasmic reticulum. The enzyme catalyses an 11beta-hydroxysteroid + NAD(+) = an 11-oxosteroid + NADH + H(+). The catalysed reaction is corticosterone + NAD(+) = 11-dehydrocorticosterone + NADH + H(+). It catalyses the reaction 11beta,17beta-dihydroxyandrost-4-ene-3-one + NAD(+) = 17beta-hydroxyandrost-4-ene-3,11-dione + NADH + H(+). It carries out the reaction 11beta-hydroxyandrost-4-ene-3,17-dione + NAD(+) = androst-4-ene-3,11,17-trione + NADH + H(+). Its pathway is steroid metabolism. Its activity is regulated as follows. Inhibited by glycyrrhetinic acid. Induced by progesterone, through the Ihh signaling pathway. In terms of biological role, catalyzes the conversion of biologically active 11beta-hydroxyglucocorticoids (11beta-hydroxysteroid) such as corticosterone, to inactive 11-ketoglucocorticoids (11-oxosteroid) such as 11-dehydrocorticosterone, in the presence of NAD(+). Functions as a dehydrogenase (oxidase), thereby decreasing the concentration of active glucocorticoids, thus protecting the nonselective mineralocorticoid receptor from occupation by glucocorticoids. Plays an important role in maintaining glucocorticoids balance during preimplantation and protects the fetus from excessive maternal corticosterone exposure. Catalyzes the oxidation of 11beta-hydroxytestosterone (11beta,17beta-dihydroxyandrost-4-ene-3-one) to 11-ketotestosterone (17beta-hydroxyandrost-4-ene-3,11-dione), a major bioactive androgen. Catalyzes the conversion of 11beta-hydroxyandrostenedione (11beta-hydroxyandrost-4-ene-3,17-dione) to 11-ketoandrostenedione (androst-4-ene-3,11,17-trione), which can be further metabolized to 11-ketotestosterone. Converts 7-beta-25-dihydroxycholesterol to 7-oxo-25-hydroxycholesterol in vitro. 7-beta-25-dihydroxycholesterol (not 7-oxo-25-hydroxycholesterol) acts as a ligand for the G-protein-coupled receptor (GPCR) Epstein-Barr virus-induced gene 2 (EBI2) and may thereby regulate immune cell migration. In Mus musculus (Mouse), this protein is 11-beta-hydroxysteroid dehydrogenase type 2 (Hsd11b2).